The chain runs to 133 residues: Nucleoside diphosphate kinase (133 aa).

Positions 9, 57, 85, 91, 102, and 112 each coordinate ATP. Catalysis depends on histidine 115, which acts as the Pros-phosphohistidine intermediate.

It belongs to the NDK family. Mg(2+) serves as cofactor.

Its subcellular location is the cytoplasm. The enzyme catalyses a 2'-deoxyribonucleoside 5'-diphosphate + ATP = a 2'-deoxyribonucleoside 5'-triphosphate + ADP. It catalyses the reaction a ribonucleoside 5'-diphosphate + ATP = a ribonucleoside 5'-triphosphate + ADP. In terms of biological role, major role in the synthesis of nucleoside triphosphates other than ATP. The ATP gamma phosphate is transferred to the NDP beta phosphate via a ping-pong mechanism, using a phosphorylated active-site intermediate. The protein is Nucleoside diphosphate kinase of Methanococcus maripaludis (strain DSM 14266 / JCM 13030 / NBRC 101832 / S2 / LL).